The primary structure comprises 222 residues: UPF0502 protein SO_1867 (222 aa).

Over residues 169–193 (EQVSATSLSADSPSADSNSLNAQDR) the composition is skewed to polar residues. The interval 169-195 (EQVSATSLSADSPSADSNSLNAQDRQQ) is disordered.

The protein belongs to the UPF0502 family.

The protein is UPF0502 protein SO_1867 of Shewanella oneidensis (strain ATCC 700550 / JCM 31522 / CIP 106686 / LMG 19005 / NCIMB 14063 / MR-1).